Consider the following 207-residue polypeptide: Large ribosomal subunit protein uL4 (207 aa).

The interval 58–78 (AGGGKKPWRQKGTGRARHGSI) is disordered. A compositionally biased stretch (basic residues) spans 63-77 (KPWRQKGTGRARHGS).

It belongs to the universal ribosomal protein uL4 family. As to quaternary structure, part of the 50S ribosomal subunit.

Its function is as follows. One of the primary rRNA binding proteins, this protein initially binds near the 5'-end of the 23S rRNA. It is important during the early stages of 50S assembly. It makes multiple contacts with different domains of the 23S rRNA in the assembled 50S subunit and ribosome. Forms part of the polypeptide exit tunnel. In Aster yellows witches'-broom phytoplasma (strain AYWB), this protein is Large ribosomal subunit protein uL4.